A 325-amino-acid polypeptide reads, in one-letter code: Beta-ketoacyl-[acyl-carrier-protein] synthase III (325 aa).

Catalysis depends on residues C119 and H252. The tract at residues 253–257 (QANIR) is ACP-binding. The active site involves N282.

The protein belongs to the thiolase-like superfamily. FabH family. Homodimer.

The protein resides in the cytoplasm. The catalysed reaction is malonyl-[ACP] + acetyl-CoA + H(+) = 3-oxobutanoyl-[ACP] + CO2 + CoA. Its pathway is lipid metabolism; fatty acid biosynthesis. Its function is as follows. Catalyzes the condensation reaction of fatty acid synthesis by the addition to an acyl acceptor of two carbons from malonyl-ACP. Catalyzes the first condensation reaction which initiates fatty acid synthesis and may therefore play a role in governing the total rate of fatty acid production. Possesses both acetoacetyl-ACP synthase and acetyl transacylase activities. Its substrate specificity determines the biosynthesis of branched-chain and/or straight-chain of fatty acids. The chain is Beta-ketoacyl-[acyl-carrier-protein] synthase III from Paracidovorax citrulli (strain AAC00-1) (Acidovorax citrulli).